The sequence spans 336 residues: dTDP-glucose 4,6-dehydratase (336 aa).

Residues 7–13 (GGAGFIG), 37–40 (DKLT), and 63–64 (DI) each bind NAD(+). Residue Thr87 coordinates substrate. An NAD(+)-binding site is contributed by Thr102. Residue 127–129 (TDE) coordinates substrate. Residue Asp128 is the Proton donor of the active site. Active-site proton acceptor residues include Glu129 and Tyr151. 151–155 (YAAAK) serves as a coordination point for NAD(+). Residue Asn180 coordinates substrate. Asn181 is an NAD(+) binding site. Residues 190–191 (KL), 206–208 (PVY), Arg215, Asn250, and 274–277 (RPGH) contribute to the substrate site.

It belongs to the NAD(P)-dependent epimerase/dehydratase family. dTDP-glucose dehydratase subfamily. As to quaternary structure, homodimer. Requires NAD(+) as cofactor.

The enzyme catalyses dTDP-alpha-D-glucose = dTDP-4-dehydro-6-deoxy-alpha-D-glucose + H2O. It functions in the pathway antibiotic biosynthesis; novobiocin biosynthesis. Its function is as follows. dTDP-glucose 4,6-dehydratase involved in the generation of the deoxysugar in the novobiocin biosynthesis pathway, an aminocoumarin family antibiotic that targets bacterial DNA gyrases. The chain is dTDP-glucose 4,6-dehydratase (novT) from Streptomyces niveus (Streptomyces spheroides).